A 360-amino-acid chain; its full sequence is MLLDKLAFIENKYDELSVKISDPSIMQNQNEWRKLCKEQADLEIIVNAYKEYKQVIEDLQVNKEMLSDESDREMKEMLNEEISSLAEREIELEKEIQILLLPKDPNDDKNVFVEIRGGAGGDEAALFAYNLFRMYTRYAERQRWSTEIMSLNETDIGGFKEVVFMIKGNGAYSKLKYESGVHRVQRVPDTESSGRIHTSTVTVAVLPEVDDVEIEIADKDVRIDVFRASGHGGQCVNTTDSAVRITHLPSGLVVSCQDEKSQLKNKEKAMKVLRSRLFEKAEQERADGIAADRKSQVGTGDRSERIRTYNYPQGRITDHRIGLTLYKLDSFLDGEVQEMINALITADQAEKMQKMGNTEM.

At Q234 the chain carries N5-methylglutamine.

It belongs to the prokaryotic/mitochondrial release factor family. In terms of processing, methylated by PrmC. Methylation increases the termination efficiency of RF1.

It is found in the cytoplasm. Peptide chain release factor 1 directs the termination of translation in response to the peptide chain termination codons UAG and UAA. In Clostridium botulinum (strain Alaska E43 / Type E3), this protein is Peptide chain release factor 1.